Reading from the N-terminus, the 453-residue chain is Lysine histidine transporter-like 1 (453 aa).

The Cytoplasmic segment spans residues 1 to 44; the sequence is MYIQMTDGVPPPPEQSSLDHRIDELERQKEIDDWLPITSSRNAK. Transmembrane regions (helical) follow at residues 45–65 and 66–86; these read WWYS…LGLP and FFMA…SWII. Residues 87–122 lie on the Cytoplasmic side of the membrane; the sequence is TLYTLWQMVEMHEMVPGKRFDRYHELGQFAFGERLG. The chain crosses the membrane as a helical span at residues 123-143; the sequence is LYIIVPQQIIVEVGVCIVYMV. The Extracellular portion of the chain corresponds to 144 to 164; that stretch reads TGGQSLKKFHEIACQDCSPIR. A helical membrane pass occupies residues 165 to 185; the sequence is LSFFIMIFASSHFVLSHLPNF. At 186-187 the chain is on the cytoplasmic side; that stretch reads NS. The chain crosses the membrane as a helical span at residues 188–208; that stretch reads ISGVSLVAAVMSLSYSTIAWT. Residues 209 to 231 are Extracellular-facing; that stretch reads ATAAKGVQEDVQYGYKSGTTAST. A helical transmembrane segment spans residues 232–252; it reads VLSFFTGLGGIAFAYAGHNVV. Topologically, residues 253 to 276 are cytoplasmic; it reads LEIQATIPSTPSNPSKGPMWRGVV. The chain crosses the membrane as a helical span at residues 277-297; that stretch reads VAYVVVALCYFPVALVGYGVF. Topologically, residues 298–318 are extracellular; it reads GNAVLDNVLMSLETPVWAIAT. Residues 319-339 traverse the membrane as a helical segment; it reads ANLFVVMHVIGSYQIFAMPVF. At 340–359 the chain is on the cytoplasmic side; sequence DMVETFLVKKLNFKPSTVLR. A helical membrane pass occupies residues 360-382; sequence FIVRNVYVALTMFIGIMIPFFGG. Over 383–385 the chain is Extracellular; the sequence is LLA. Residues 386–408 traverse the membrane as a helical segment; the sequence is FFGGFAFAPTSYFLPCIMWLLIY. At 409-412 the chain is on the cytoplasmic side; sequence KPKR. Residues 413–433 form a helical membrane-spanning segment; sequence FSLSWWTNWVCIVLGVVLMIL. Over 434–453 the chain is Extracellular; that stretch reads SSIGGLRQIIIQSKDYSFFS.

The protein belongs to the amino acid/polyamine transporter 2 family. Amino acid/auxin permease (AAAP) (TC 2.A.18.2) subfamily.

The protein localises to the cell membrane. Its function is as follows. Amino acid transporter. The polypeptide is Lysine histidine transporter-like 1 (Arabidopsis thaliana (Mouse-ear cress)).